The sequence spans 416 residues: 3-isopropylmalate dehydratase large subunit 2 (416 aa).

Residues C296, C356, and C359 each contribute to the [4Fe-4S] cluster site.

Belongs to the aconitase/IPM isomerase family. LeuC type 2 subfamily. In terms of assembly, heterodimer of LeuC and LeuD. Requires [4Fe-4S] cluster as cofactor.

The catalysed reaction is (2R,3S)-3-isopropylmalate = (2S)-2-isopropylmalate. It functions in the pathway amino-acid biosynthesis; L-leucine biosynthesis; L-leucine from 3-methyl-2-oxobutanoate: step 2/4. Functionally, catalyzes the isomerization between 2-isopropylmalate and 3-isopropylmalate, via the formation of 2-isopropylmaleate. This is 3-isopropylmalate dehydratase large subunit 2 from Archaeoglobus fulgidus (strain ATCC 49558 / DSM 4304 / JCM 9628 / NBRC 100126 / VC-16).